The chain runs to 502 residues: Tryptophan decarboxylase TDC1 (502 aa).

The segment covering 1 to 18 has biased composition (polar residues); sequence MGSLDSNYDTESPASVGQ. The disordered stretch occupies residues 1–21; that stretch reads MGSLDSNYDTESPASVGQFNP. The residue at position 319 (Lys319) is an N6-(pyridoxal phosphate)lysine.

This sequence belongs to the group II decarboxylase family. Requires pyridoxal 5'-phosphate as cofactor. In terms of tissue distribution, highly expressed in apex. Expressed in young stem and bark tissues. Expressed at low levels in leaves, fruits and seeds.

The enzyme catalyses L-tryptophan + H(+) = tryptamine + CO2. Involved in the biosynthesis of tryptamine. Supplies tryptamine for the indole moiety of camptothecin (CPT), an anti-cancer monoterpene alkaloid. Represents a key step in monoterpene indole alkaloid biosynthesis. Is specific for tryptophan, and inactive against tyrosine, phenylalanine and 3,4-dihydroxyphenylalanine (dopa). This is Tryptophan decarboxylase TDC1 from Camptotheca acuminata (Happy tree).